The sequence spans 133 residues: Nickel-responsive regulator (133 aa).

Residues His76, His87, His89, and Cys95 each contribute to the Ni(2+) site.

It belongs to the transcriptional regulatory CopG/NikR family. In terms of assembly, homotetramer. Ni(2+) is required as a cofactor.

Its function is as follows. Transcriptional repressor of the nikABCDE operon. Is active in the presence of excessive concentrations of intracellular nickel. The chain is Nickel-responsive regulator from Escherichia coli (strain SMS-3-5 / SECEC).